The primary structure comprises 253 residues: MKVPILSRLRSLSSIDRNNEEKNVDMEHQVSLDFASAPNSPTVNKSDKNNKHDKHDKSGEKAPSTPKITTTSPPSPSSSSSPSPSSSTTTSPTTTTTTLSGSDSVSKKSGKTLSPTTPTLKSTLSTSSMKSTPSGSVKNTPRQTPRQTPRQTPRGSMTPREGGSDQFESGSLSPIGETYLEGEGYEESPKSSSFFSKFISNTFSGFSMDAAPETVVTSTPRQQSRPPSAQNTPNFTSQGGSRSTSRRQSAIQL.

Residues 1 to 14 show a composition bias toward low complexity; sequence MKVPILSRLRSLSS. Disordered regions lie at residues 1–192 and 212–253; these read MKVP…PKSS and PETV…AIQL. 2 stretches are compositionally biased toward basic and acidic residues: residues 17–30 and 45–60; these read RNNE…EHQV and KSDK…KSGE. 2 stretches are compositionally biased toward low complexity: residues 63 to 104 and 111 to 154; these read PSTP…GSDS and KTLS…QTPR. Polar residues predominate over residues 215–235; it reads VVTSTPRQQSRPPSAQNTPNF. Over residues 236–253 the composition is skewed to low complexity; the sequence is TSQGGSRSTSRRQSAIQL.

This is an uncharacterized protein from Dictyostelium discoideum (Social amoeba).